The following is a 647-amino-acid chain: DNA mismatch repair protein MutL (647 aa).

This sequence belongs to the DNA mismatch repair MutL/HexB family.

Functionally, this protein is involved in the repair of mismatches in DNA. It is required for dam-dependent methyl-directed DNA mismatch repair. May act as a 'molecular matchmaker', a protein that promotes the formation of a stable complex between two or more DNA-binding proteins in an ATP-dependent manner without itself being part of a final effector complex. The polypeptide is DNA mismatch repair protein MutL (Bacillus cereus (strain Q1)).